Here is a 390-residue protein sequence, read N- to C-terminus: Ketoisovalerate reductase BEA2 (390 aa).

Residue 70–75 (GPGNIG) participates in NADP(+) binding. K285 serves as the catalytic Proton donor. Substrate is bound by residues N289 and N293.

The protein belongs to the ketopantoate reductase family.

The enzyme catalyses (R)-2-hydroxy-3-methylbutanoate + NADP(+) = 3-methyl-2-oxobutanoate + NADPH + H(+). Its activity is regulated as follows. The reductase activity is increased by Mg(2+) (195%), Ca(2+) (169%) and slightly increased by K(+) (123%). The reduction activity is inhibited by Fe(2+) and Co(2+), and almost totally inhibited by Cu(2+), Mn(2+), Zn(2+) and Fe(3+) (from 3% to 9% residual activity respectively). The chelating agent EDTA had little effect, suggesting Mg(2+) and Ca(2+) are not determining factors, though they could promote the reductase enzyme activity. In terms of biological role, ketoisovalerate reductase; part of the gene cluster that mediates the biosynthesis of beauvericin (BEA), a non-ribosomal cyclic hexadepsipeptide that shows antibiotic, antifungal, insecticidal, and cancer cell antiproliferative and antihaptotactic activity. Ketoisovalerate reductase BEA2 catalyzes the NADPH-specific reduction of ketoisovaleric acid to hydroxyisovalerate, a precursor for beauvericin biosynthesis. The nonribosomal cyclodepsipeptide synthetase BEA1 then catalyzes the formation of beauvericin via condensation and cyclization of 3 dipeptidol monomers, each composed of one unit of hydroxyisovalerate and one unit of N-methyl-phenylalanine. This Gibberella intermedia (Bulb rot disease fungus) protein is Ketoisovalerate reductase BEA2.